A 172-amino-acid polypeptide reads, in one-letter code: Protein PLASTID REDOX INSENSITIVE 2, chloroplastic (172 aa).

Residues 1–54 constitute a chloroplast transit peptide; that stretch reads MAARLWAAAVAPATLNPPLLTLSASSSPSSSRLRRSVLGRLRSRAPRPADFVCR.

The protein localises to the plastid. It localises to the chloroplast stroma. It is found in the chloroplast nucleoid. Its function is as follows. Required for the activity of the plastid-encoded RNA polymerase (PEP) and full expression of genes transcribed by PEP. This chain is Protein PLASTID REDOX INSENSITIVE 2, chloroplastic, found in Oryza sativa subsp. japonica (Rice).